The primary structure comprises 683 residues: Long-chain-fatty-acid--CoA ligase 5 (683 aa).

Residues 12 to 32 (LPTPALICILTFGAAIFLWLI) form a helical; Signal-anchor for type III membrane protein membrane-spanning segment. Position 32 is a phosphoserine (Ile-32). Residues 33 to 683 (TRPQPVLPLL…IDSLYEHIQD (651 aa)) are Cytoplasmic-facing. Lys-361 is modified (N6-acetyllysine).

It belongs to the ATP-dependent AMP-binding enzyme family. Mg(2+) serves as cofactor.

It localises to the mitochondrion. It is found in the endoplasmic reticulum. The protein localises to the mitochondrion outer membrane. Its subcellular location is the endoplasmic reticulum membrane. The protein resides in the cell membrane. The enzyme catalyses a long-chain fatty acid + ATP + CoA = a long-chain fatty acyl-CoA + AMP + diphosphate. It carries out the reaction (5Z,8Z,11Z,14Z)-eicosatetraenoate + ATP + CoA = (5Z,8Z,11Z,14Z)-eicosatetraenoyl-CoA + AMP + diphosphate. The catalysed reaction is hexadecanoate + ATP + CoA = hexadecanoyl-CoA + AMP + diphosphate. It catalyses the reaction (E)-hexadec-2-enoate + ATP + CoA = (2E)-hexadecenoyl-CoA + AMP + diphosphate. The enzyme catalyses 15-hydroxy-(5Z,8Z,11Z,13E)-eicosatetraenoate + ATP + CoA = 15-hydroxy-(5Z,8Z,11Z,13E)-eicosatetraenoyl-CoA + AMP + diphosphate. It carries out the reaction 12-hydroxy-(5Z,8Z,10E,14Z)-eicosatetraenoate + ATP + CoA = 12-hydroxy-(5Z,8Z,10E,14Z)-eicosatetraenoyl-CoA + AMP + diphosphate. The catalysed reaction is 5-hydroxy-(6E,8Z,11Z,14Z)-eicosatetraenoate + ATP + CoA = 5-hydroxy-(6E,8Z,11Z,14Z)-eicosatetraenoyl-CoA + AMP + diphosphate. It catalyses the reaction 14,15-epoxy-(5Z,8Z,11Z)-eicosatrienoate + ATP + CoA = 14,15-epoxy-(5Z,8Z,11Z)-eicosatrienoyl-CoA + AMP + diphosphate. The enzyme catalyses 11,12-epoxy-(5Z,8Z,14Z)-eicosatrienoate + ATP + CoA = 11,12-epoxy-(5Z,8Z,14Z)-eicosatrienoyl-CoA + AMP + diphosphate. It carries out the reaction (9Z)-octadecenoate + ATP + CoA = (9Z)-octadecenoyl-CoA + AMP + diphosphate. Functionally, catalyzes the conversion of long-chain fatty acids to their active form acyl-CoAs for both synthesis of cellular lipids, and degradation via beta-oxidation. ACSL5 may activate fatty acids from exogenous sources for the synthesis of triacylglycerol destined for intracellular storage. Utilizes a wide range of saturated fatty acids with a preference for C16-C18 unsaturated fatty acids. It was suggested that it may also stimulate fatty acid oxidation. At the villus tip of the crypt-villus axis of the small intestine may sensitize epithelial cells to apoptosis specifically triggered by the death ligand TRAIL. May have a role in the survival of glioma cells. This Homo sapiens (Human) protein is Long-chain-fatty-acid--CoA ligase 5.